Reading from the N-terminus, the 539-residue chain is MSFLVENQLLALVVIMTVGLLLGRIKIFGFRLGVAAVLFVGLALSTIEPDISVPSLIYVVGLSLFVYTIGLEAGPGFFTSMKTTGLRNNALTLGAIIATTALAWALITVLNIDAASGAGMLTGALTNTPAMAAVVDALPSLIDDTGQLHLIAELPVVAYSLAYPLGVLIVILSIAIFSSVFKVDHNKEAEEAGVAVQELKGRRIRVTVADLPALENIPELLNLHVIVSRVERDGEQFIPLYGEHARIGDVLTVVGADEELNRAEKAIGELIDGDPYSNVELDYRRIFVSNTAVVGTPLSKLQPLFKDMLITRIRRGDTDLVASSDMTLQLGDRVRVVAPAEKLREATQLLGDSYKKLSDFNLLPLAAGLMIGVLVGMVEFPLPGGSSLKLGNAGGPLVVALLLGMINRTGKFVWQIPYGANLALRQLGITLFLAAIGTSAGAGFRSAISDPQSLTIIGFGALLTLFISITVLFVGHKLMKIPFGETAGILAGTQTHPAVLSYVSDASRNELPAMGYTSVYPLAMIAKILAAQTLLFLLI.

The next 5 helical transmembrane spans lie at 4–22 (LVENQLLALVVIMTVGLLL), 27–46 (IFGFRLGVAAVLFVGLALST), 56–78 (LIYVVGLSLFVYTIGLEAGPGFF), 90–112 (ALTLGAIIATTALAWALITVLNI), and 155–177 (PVVAYSLAYPLGVLIVILSIAIF). RCK C-terminal domains follow at residues 187–269 (KEAE…AIGE) and 271–352 (IDGD…LLGD). 4 consecutive transmembrane segments (helical) span residues 360-382 (FNLLPLAAGLMIGVLVGMVEFPL), 422-444 (LALRQLGITLFLAAIGTSAGAGF), 453-475 (SLTIIGFGALLTLFISITVLFVG), and 516-538 (YTSVYPLAMIAKILAAQTLLFLL).

It belongs to the AAE transporter (TC 2.A.81) family.

Its subcellular location is the cell membrane. This is an uncharacterized protein from Corynebacterium glutamicum (strain ATCC 13032 / DSM 20300 / JCM 1318 / BCRC 11384 / CCUG 27702 / LMG 3730 / NBRC 12168 / NCIMB 10025 / NRRL B-2784 / 534).